The primary structure comprises 220 residues: Putative vesicle-associated membrane protein 726 (220 aa).

Residues 1–196 (MGQQSLIYSF…LWFENMKIKL (196 aa)) lie on the Cytoplasmic side of the membrane. Residues 10 to 114 (FVARGTVILA…SLNKEFGSKL (105 aa)) form the Longin domain. The v-SNARE coiled-coil homology domain occupies 130 to 190 (KLSKVKAQVT…TKMKRKLWFE (61 aa)). Residues 197-217 (IVFGIIVALILIIILSVCHGF) form a helical; Anchor for type IV membrane protein membrane-spanning segment. Over 218–220 (KCT) the chain is Vesicular.

This sequence belongs to the synaptobrevin family. Expressed in flowers, leaves, stems and roots.

The protein localises to the cell membrane. It localises to the early endosome membrane. Functionally, involved in the targeting and/or fusion of transport vesicles to their target membrane. This is Putative vesicle-associated membrane protein 726 (VAMP726) from Arabidopsis thaliana (Mouse-ear cress).